A 155-amino-acid polypeptide reads, in one-letter code: ATP synthase assembly factor FMC1, mitochondrial (155 aa).

It belongs to the FMC1 family.

It localises to the mitochondrion. Its function is as follows. Needed for the assembly of the mitochondrial F1-F0 complex at high temperature. The chain is ATP synthase assembly factor FMC1, mitochondrial (FMC1) from Saccharomyces cerevisiae (strain ATCC 204508 / S288c) (Baker's yeast).